The sequence spans 331 residues: MKEEECSPLLSQDTAGREHPLTRNSPPTANIPCPAPWENQKGSWGCRCCPGAKRQASGEGQASSLPLSTGSNCVKYLIFLSNFLFSLPSLLALAAGLWGLTVKRSQGIGWGGPVPTDPMLMLVLGGLVVSVVSLSGCLGAFCENSCLLHWYCGAVLFCLALEALAGVLMVTLWKPLQDSLKYTLHAAIIHYWDDPDLHFLLDQVQLGLQCCGAVSYQDWQQNLYFNCSSPGVQACSLPASCCINPQEDGAVVNTQCGFGALGLDQNVAGQVVFLQGCWPALQEWLRGNTGAIGDCAVAVVMIQGTELLLAACLLRALAVHEAAEDIEAGPL.

Positions 1 to 34 (MKEEECSPLLSQDTAGREHPLTRNSPPTANIPCP) are disordered. The Cytoplasmic portion of the chain corresponds to 1–76 (MKEEECSPLL…LSTGSNCVKY (76 aa)). Residues 77-97 (LIFLSNFLFSLPSLLALAAGL) traverse the membrane as a helical segment. Over 98–120 (WGLTVKRSQGIGWGGPVPTDPML) the chain is Extracellular. Residues 121 to 141 (MLVLGGLVVSVVSLSGCLGAF) traverse the membrane as a helical segment. Residues 142-152 (CENSCLLHWYC) lie on the Cytoplasmic side of the membrane. Residues 153–173 (GAVLFCLALEALAGVLMVTLW) traverse the membrane as a helical segment. Residues 174 to 331 (KPLQDSLKYT…AAEDIEAGPL (158 aa)) are Extracellular-facing. Disulfide bonds link Cys210/Cys277, Cys211/Cys241, Cys227/Cys235, and Cys242/Cys256. A glycan (N-linked (GlcNAc...) asparagine) is linked at Asn226.

It belongs to the tetraspanin (TM4SF) family. As to quaternary structure, interacts with ADAM10.

It localises to the cell membrane. In terms of biological role, part of TspanC8 subgroup, composed of 6 members that interact with the transmembrane metalloprotease ADAM10. This interaction is required for ADAM10 exit from the endoplasmic reticulum and for enzymatic maturation and trafficking to the cell surface as well as substrate specificity. Different TspanC8/ADAM10 complexes have distinct substrates. The sequence is that of Tetraspanin-10 (Tspan10) from Mus musculus (Mouse).